Reading from the N-terminus, the 462-residue chain is Nitrate/nitrite transporter NarU (462 aa).

Topologically, residues 1–35 are cytoplasmic; that stretch reads MALQNEKNSRYLLRDWKPENPAFWENKGKHIARRN. A helical membrane pass occupies residues 36–56; sequence LWISVSCLLLAFCVWMLFSAV. At 57–76 the chain is on the periplasmic side; it reads TVNLNKIGFNFTTDQLFLLT. The chain crosses the membrane as a helical span at residues 77-97; the sequence is ALPSVSGALLRVPYSFMVPIF. Residues 98–101 are Cytoplasmic-facing; the sequence is GGRR. Residues 102 to 122 form a helical membrane-spanning segment; sequence WTVFSTAILIIPCVWLGIAVQ. Residues 123–125 are Periplasmic-facing; sequence NPN. Residues 126 to 146 form a helical membrane-spanning segment; sequence TPFGIFIVIALLCGFAGANFA. Residues 147 to 180 are Cytoplasmic-facing; the sequence is SSMGNISFFFPKAKQGSALGINGGLGNLGVSVMQ. The helical transmembrane segment at 181 to 201 threads the bilayer; it reads LVAPLVIFVPVFAFLGVNGVP. Residues 202-206 are Periplasmic-facing; that stretch reads QADGS. Residues 207 to 227 form a helical membrane-spanning segment; sequence VMSLANAAWIWVPLLAIATIA. Topologically, residues 228–258 are cytoplasmic; the sequence is AWSGMNDIASSRASIADQLPVLQRLHLWLLS. The chain crosses the membrane as a helical span at residues 259 to 279; the sequence is LLYLATFGSFIGFSAGFAMLA. Over 280–287 the chain is Periplasmic; the sequence is KTQFPDVN. The helical transmembrane segment at 288–308 threads the bilayer; it reads ILRLAFFGPFIGAIARSVGGA. Over 309–317 the chain is Cytoplasmic; the sequence is ISDKFGGVR. Residues 318–338 traverse the membrane as a helical segment; it reads VTLINFIFMAIFSALLFLTLP. The Periplasmic portion of the chain corresponds to 339–344; that stretch reads GTGSGN. Residues 345-365 traverse the membrane as a helical segment; the sequence is FIAFYAVFMGLFLTAGLGSGS. The Cytoplasmic portion of the chain corresponds to 366–401; it reads TFQMIAVIFRQITIYRVKMKGGSDEQAHKEAVTETA. The chain crosses the membrane as a helical span at residues 402 to 422; it reads AALGFISAIGAVGGFFIPQAF. Over 423-432 the chain is Periplasmic; that stretch reads GMSLNMTGSP. The helical transmembrane segment at 433–453 threads the bilayer; that stretch reads VGAMKVFLIFYIVCVLLTWLV. The Cytoplasmic segment spans residues 454 to 462; it reads YGRRKFSQK.

It belongs to the major facilitator superfamily. Nitrate/nitrite porter (TC 2.A.1.8) family.

The protein localises to the cell inner membrane. Functionally, catalyzes nitrate uptake, nitrite uptake and nitrite export across the cytoplasmic membrane. May function as a nitrate/H(+) and nitrite/H(+) channel. Could confer a selective advantage during severe nutrient starvation or slow growth. In Escherichia coli (strain K12), this protein is Nitrate/nitrite transporter NarU (narU).